The primary structure comprises 312 residues: Ribosomal RNA small subunit methyltransferase H (312 aa).

S-adenosyl-L-methionine contacts are provided by residues 35–37 (GGH), Asp-55, Asp-101, and Gln-108. The tract at residues 285-306 (ALKPSEHEVTENSRSRSSVLRV) is disordered. Over residues 287–298 (KPSEHEVTENSR) the composition is skewed to basic and acidic residues.

Belongs to the methyltransferase superfamily. RsmH family.

The protein resides in the cytoplasm. The catalysed reaction is cytidine(1402) in 16S rRNA + S-adenosyl-L-methionine = N(4)-methylcytidine(1402) in 16S rRNA + S-adenosyl-L-homocysteine + H(+). Functionally, specifically methylates the N4 position of cytidine in position 1402 (C1402) of 16S rRNA. The polypeptide is Ribosomal RNA small subunit methyltransferase H (Aeromonas salmonicida (strain A449)).